The following is a 272-amino-acid chain: Hemin import ATP-binding protein HmuV (272 aa).

Residues 2 to 255 enclose the ABC transporter domain; the sequence is LNADHLHVAR…EPIARCYGFR (254 aa). 34-41 provides a ligand contact to ATP; the sequence is GRNGAGKS.

It belongs to the ABC transporter superfamily. Heme (hemin) importer (TC 3.A.1.14.5) family. The complex is composed of two ATP-binding proteins (HmuV), two transmembrane proteins (HmuU) and a solute-binding protein (HmuT).

The protein resides in the cell inner membrane. Functionally, part of the ABC transporter complex HmuTUV involved in hemin import. Responsible for energy coupling to the transport system. This Burkholderia pseudomallei (strain 1710b) protein is Hemin import ATP-binding protein HmuV.